Reading from the N-terminus, the 211-residue chain is Uracil phosphoribosyltransferase (211 aa).

Residues Arg-77, Arg-102, and 129–137 (DPMLATGGS) contribute to the 5-phospho-alpha-D-ribose 1-diphosphate site. Uracil-binding positions include Ile-192 and 197–199 (GDA). Asp-198 is a binding site for 5-phospho-alpha-D-ribose 1-diphosphate.

It belongs to the UPRTase family. Mg(2+) is required as a cofactor.

It catalyses the reaction UMP + diphosphate = 5-phospho-alpha-D-ribose 1-diphosphate + uracil. The protein operates within pyrimidine metabolism; UMP biosynthesis via salvage pathway; UMP from uracil: step 1/1. Allosterically activated by GTP. Its function is as follows. Catalyzes the conversion of uracil and 5-phospho-alpha-D-ribose 1-diphosphate (PRPP) to UMP and diphosphate. The chain is Uracil phosphoribosyltransferase from Corynebacterium diphtheriae (strain ATCC 700971 / NCTC 13129 / Biotype gravis).